A 503-amino-acid chain; its full sequence is Activin receptor type-1-like (503 aa).

Positions 1–21 are cleaved as a signal peptide; the sequence is MTLGSPRRGLLMLLMALVTQG. Topologically, residues 22–118 are extracellular; that stretch reads DPVKPSRGPL…PSEQPGTDGQ (97 aa). 3 disulfides stabilise this stretch: Cys-34/Cys-51, Cys-36/Cys-41, and Cys-46/Cys-69. The mediates specificity for BMP ligand stretch occupies residues 73–76; that stretch reads HREL. 2 disulfide bridges follow: Cys-77–Cys-89 and Cys-90–Cys-95. Asn-98 is a glycosylation site (N-linked (GlcNAc...) asparagine). A helical transmembrane segment spans residues 119 to 141; sequence LALILGPVLALLALVALGVLGLW. Topologically, residues 142–503 are cytoplasmic; that stretch reads HVRRRQEKQR…NSPEKPKVIQ (362 aa). Phosphoserine is present on residues Ser-155, Ser-160, and Ser-161. The 30-residue stretch at 172 to 201 folds into the GS domain; it reads SMLGDLLDSDCTTGSGSGLPFLVQRTVARQ. The Protein kinase domain maps to 202–492; that stretch reads VALVECVGKG…LRIKKTLQKI (291 aa). ATP contacts are provided by residues 208 to 216 and Lys-229; that span reads VGKGRYGEV. Asp-330 functions as the Proton acceptor in the catalytic mechanism.

Belongs to the protein kinase superfamily. TKL Ser/Thr protein kinase family. TGFB receptor subfamily. Interacts with TSC22D1/TSC-22. Mg(2+) is required as a cofactor. The cofactor is Mn(2+).

It localises to the cell membrane. It catalyses the reaction L-threonyl-[receptor-protein] + ATP = O-phospho-L-threonyl-[receptor-protein] + ADP + H(+). It carries out the reaction L-seryl-[receptor-protein] + ATP = O-phospho-L-seryl-[receptor-protein] + ADP + H(+). Its function is as follows. Type I receptor for TGF-beta family ligands BMP9/GDF2 and BMP10 and important regulator of normal blood vessel development. On ligand binding, forms a receptor complex consisting of two type II and two type I transmembrane serine/threonine kinases. Type II receptors phosphorylate and activate type I receptors which autophosphorylate, then bind and activate SMAD transcriptional regulators. May bind activin as well. This Pongo abelii (Sumatran orangutan) protein is Activin receptor type-1-like (ACVRL1).